Here is a 507-residue protein sequence, read N- to C-terminus: ATP synthase subunit alpha, chloroplastic (507 aa).

ATP is bound at residue 170 to 177 (GDRQTGKT).

This sequence belongs to the ATPase alpha/beta chains family. F-type ATPases have 2 components, CF(1) - the catalytic core - and CF(0) - the membrane proton channel. CF(1) has five subunits: alpha(3), beta(3), gamma(1), delta(1), epsilon(1). CF(0) has four main subunits: a, b, b' and c.

Its subcellular location is the plastid. It localises to the chloroplast thylakoid membrane. It carries out the reaction ATP + H2O + 4 H(+)(in) = ADP + phosphate + 5 H(+)(out). In terms of biological role, produces ATP from ADP in the presence of a proton gradient across the membrane. The alpha chain is a regulatory subunit. This Vitis vinifera (Grape) protein is ATP synthase subunit alpha, chloroplastic.